The primary structure comprises 625 residues: DNA-directed RNA polymerase subunit gamma (625 aa).

Positions 71, 73, 86, and 89 each coordinate Zn(2+). Positions 467, 469, and 471 each coordinate Mg(2+).

It belongs to the RNA polymerase beta' chain family. RpoC1 subfamily. In terms of assembly, in cyanobacteria the RNAP catalytic core is composed of 2 alpha, 1 beta, 1 beta', 1 gamma and 1 omega subunit. When a sigma factor is associated with the core the holoenzyme is formed, which can initiate transcription. It depends on Mg(2+) as a cofactor. Zn(2+) is required as a cofactor.

The catalysed reaction is RNA(n) + a ribonucleoside 5'-triphosphate = RNA(n+1) + diphosphate. Its function is as follows. DNA-dependent RNA polymerase catalyzes the transcription of DNA into RNA using the four ribonucleoside triphosphates as substrates. This chain is DNA-directed RNA polymerase subunit gamma, found in Nostoc punctiforme (strain ATCC 29133 / PCC 73102).